The chain runs to 315 residues: DNA-directed RNA polymerase subunit alpha (315 aa).

Residues 1-227 (MTQFQIECVE…NLFNPFKKIN (227 aa)) are alpha N-terminal domain (alpha-NTD). The interval 239-315 (EDKISQIPIE…PKRKTNKKEN (77 aa)) is alpha C-terminal domain (alpha-CTD).

It belongs to the RNA polymerase alpha chain family. As to quaternary structure, in plastids the minimal PEP RNA polymerase catalytic core is composed of four subunits: alpha, beta, beta', and beta''. When a (nuclear-encoded) sigma factor is associated with the core the holoenzyme is formed, which can initiate transcription.

The protein resides in the plastid. The protein localises to the cyanelle. It catalyses the reaction RNA(n) + a ribonucleoside 5'-triphosphate = RNA(n+1) + diphosphate. In terms of biological role, DNA-dependent RNA polymerase catalyzes the transcription of DNA into RNA using the four ribonucleoside triphosphates as substrates. The sequence is that of DNA-directed RNA polymerase subunit alpha from Cyanophora paradoxa.